A 249-amino-acid polypeptide reads, in one-letter code: ATP synthase subunit a (249 aa).

6 consecutive transmembrane segments (helical) span residues 29–49 (ASLFMVATVAAASGFLYFATS), 84–104 (FFPFVFSLFMFVLTANLLGMF), 114–134 (IIVTFALACLVIGTVIVYGFY), 140–160 (FFGIFAPSGVPKALLPLVASI), 193–213 (FVASMGALGALGVGGAVLPLI), and 216–236 (VAMTALEFLVAFLQAYVFAVL).

This sequence belongs to the ATPase A chain family. As to quaternary structure, F-type ATPases have 2 components, CF(1) - the catalytic core - and CF(0) - the membrane proton channel. CF(1) has five subunits: alpha(3), beta(3), gamma(1), delta(1), epsilon(1). CF(0) has three main subunits: a(1), b(2) and c(9-12). The alpha and beta chains form an alternating ring which encloses part of the gamma chain. CF(1) is attached to CF(0) by a central stalk formed by the gamma and epsilon chains, while a peripheral stalk is formed by the delta and b chains.

It is found in the cell inner membrane. In terms of biological role, key component of the proton channel; it plays a direct role in the translocation of protons across the membrane. The chain is ATP synthase subunit a from Agrobacterium fabrum (strain C58 / ATCC 33970) (Agrobacterium tumefaciens (strain C58)).